A 132-amino-acid polypeptide reads, in one-letter code: Small ribosomal subunit protein uS11 (132 aa).

Belongs to the universal ribosomal protein uS11 family. In terms of assembly, part of the 30S ribosomal subunit.

In terms of biological role, located on the platform of the 30S subunit. This Korarchaeum cryptofilum (strain OPF8) protein is Small ribosomal subunit protein uS11 (rps11).